A 219-amino-acid chain; its full sequence is Epididymal secretory glutathione peroxidase (219 aa).

An N-terminal signal peptide occupies residues 1-21 (MTVQLGAFYLFPLFMAGFVQT). The active site involves cysteine 71.

The protein belongs to the glutathione peroxidase family. As to quaternary structure, homotetramer. Proximal caput epididymis.

It is found in the secreted. It carries out the reaction 2 glutathione + H2O2 = glutathione disulfide + 2 H2O. In terms of biological role, may constitute a glutathione peroxidase-like protective system against peroxide damage in sperm membrane lipids. Since the purified porcine enzyme has very little activity towards hydrogen peroxide or organic hydroperoxides the protective effect is not likely to be exerted by its enzymatic activity. Instead, may protect sperm from premature acrosome reaction in the epididymis by binding to lipid peroxides, which might otherwise interact with phospholipase A2 and induce the acrosome reaction. In Sus scrofa (Pig), this protein is Epididymal secretory glutathione peroxidase (GPX5).